A 642-amino-acid chain; its full sequence is Threonine--tRNA ligase (642 aa).

Residues 1-61 form the TGS domain; that stretch reads MPVITLPDGS…DTDAQLAIIT (61 aa). Residues 243 to 534 are catalytic; sequence DHRKIGKQLD…LTEEFAGFFP (292 aa). 3 residues coordinate Zn(2+): Cys-334, His-385, and His-511.

This sequence belongs to the class-II aminoacyl-tRNA synthetase family. As to quaternary structure, homodimer. Zn(2+) serves as cofactor.

It localises to the cytoplasm. It carries out the reaction tRNA(Thr) + L-threonine + ATP = L-threonyl-tRNA(Thr) + AMP + diphosphate + H(+). Catalyzes the attachment of threonine to tRNA(Thr) in a two-step reaction: L-threonine is first activated by ATP to form Thr-AMP and then transferred to the acceptor end of tRNA(Thr). Also edits incorrectly charged L-seryl-tRNA(Thr). The chain is Threonine--tRNA ligase from Pectobacterium carotovorum subsp. carotovorum (strain PC1).